Consider the following 86-residue polypeptide: Small ribosomal subunit protein uS15 (86 aa).

The protein belongs to the universal ribosomal protein uS15 family. As to quaternary structure, part of the 30S ribosomal subunit. Forms a bridge to the 50S subunit in the 70S ribosome, contacting the 23S rRNA.

Functionally, one of the primary rRNA binding proteins, it binds directly to 16S rRNA where it helps nucleate assembly of the platform of the 30S subunit by binding and bridging several RNA helices of the 16S rRNA. Forms an intersubunit bridge (bridge B4) with the 23S rRNA of the 50S subunit in the ribosome. In Mycoplasma pneumoniae (strain ATCC 29342 / M129 / Subtype 1) (Mycoplasmoides pneumoniae), this protein is Small ribosomal subunit protein uS15.